The chain runs to 606 residues: Elongation factor 4 (606 aa).

The 183-residue stretch at 10–192 (KNIRNFSIIA…ALVARVPPPQ (183 aa)) folds into the tr-type G domain. Residues 22–27 (DHGKST) and 139–142 (NKID) contribute to the GTP site.

It belongs to the TRAFAC class translation factor GTPase superfamily. Classic translation factor GTPase family. LepA subfamily.

The protein resides in the cell inner membrane. The enzyme catalyses GTP + H2O = GDP + phosphate + H(+). Its function is as follows. Required for accurate and efficient protein synthesis under certain stress conditions. May act as a fidelity factor of the translation reaction, by catalyzing a one-codon backward translocation of tRNAs on improperly translocated ribosomes. Back-translocation proceeds from a post-translocation (POST) complex to a pre-translocation (PRE) complex, thus giving elongation factor G a second chance to translocate the tRNAs correctly. Binds to ribosomes in a GTP-dependent manner. The protein is Elongation factor 4 of Nitrosococcus oceani (strain ATCC 19707 / BCRC 17464 / JCM 30415 / NCIMB 11848 / C-107).